Reading from the N-terminus, the 119-residue chain is gSG7 salivary protein (119 aa).

2 cysteine pairs are disulfide-bonded: Cys-58-Cys-113 and Cys-81-Cys-91.

Its subcellular location is the secreted. Its activity is regulated as follows. The activity is increased in the presence of host properdin (CFP). Functionally, salivary protein that inhibits the alternative pathway of complement system activation in the host while having no inhibitory effect on the classical pathway. Inhibits activity of activated host C3-convertase complex C3bBb (C3-CFB). Enhances accumulation of C3bBb on immobilized properdin. In Anopheles freeborni (Western malaria mosquito), this protein is gSG7 salivary protein.